A 1086-amino-acid chain; its full sequence is MAHIYRPKHHVRFVTASSLFDGHDASINIMRRILQASGAEVIHLGHNRSVEEIVNAAIQEDVQGIAVSSYQGGHMEFFKYMYDLLQERGASHIRIYGGGGGVIIPREIKELHEYGIARIFSPEDGRRLGLQGMINVMLEECDFPTVTVVTDELERLPSGDVQAIARLITLCEYRAEGENKEAAAAAEAAIEQVKALEKRVPVLGITGTGGAGKSSLTDELVRRFLNEIPDIKIAILSVDPTKQKTGGALLGDRIRMNSINSPRVYMRSLATRHSRTELSPAIRDAISVVKAAGFDLVIIETSGIGQGDAAITEVCDVSMYVMTSEFGAPTQLEKIDMIDYADLIVINKFERKGSEDAKRQVQKQYQRSHQLFDRDVSEMPVYGTIASQFNDPGTNTLFVALVDTINKKAGTNWKTSLKTVANVEKHNVIIPNERRYYLREIAETVRSYHRRAEQQVEVARRLFQIEGAIEAAKERGEAEDVIRALETLKADYEAKLTPESKRILATWEETKAKYAAKQFVTKVRDKEIVTELTTKTLSGLDIPKVVLPKFKDYGEILRWVYKENVPGSFPYTAGVFPFKRQGEDPKRQFAGEGTPERTNRRFHYLCKEDKAKRLSTAFDSVTLYGEDPDYRPDIFGKVGESGVSVCTLDDMKKLYKGFDLCDPLTSVSMTINGPAPILLAMFMNTAIDQQVEKKEAELGRPLTPEEYEQVKEWTLQTVRGTVQADILKEDQGQNTCIFSTDFALKMMGDIQEYFIKHRVRNYYSVSISGYHIAEAGANPITQLAFTLANGFTYVEYYLSRGMHIDDFAPNLSFFFSNGLDPEYSVIGRVARRIWAIVMREKYGANERSQKLKYHIQTSGRSLHAQEIDFNDIRTTLQALLAIYDNCNSLHTNAYDEAITTPTEESVRRAMAIQLIITKEFGLTKNENPLQGSFIIEELTDLVEEAVLQEFERLNDRGGVLGAMEMQYQRGKIQDESLYYETKKHTGELPIIGVNTFLNPNPPSEDELNNIQLARATYEEKETQIRNLREFQERNKDKAGPALERLKQVATSGGNIFEELMETVKVASLGQITRALYEVGGQYRRNM.

The B12-binding domain occupies 10-140 (HVRFVTASSL…QGMINVMLEE (131 aa)). Adenosylcob(III)alamin is bound at residue histidine 23. Positions 153–407 (LERLPSGDVQ…FVALVDTINK (255 aa)) are GTPase chaperone MeaI. 210 to 215 (GAGKSS) serves as a coordination point for GTP. Positions 214, 238, 239, and 252 each coordinate Mg(2+). Arginine 255 lines the GTP pocket. Mg(2+) contacts are provided by glutamate 300 and threonine 301. GTP is bound at residue 347–350 (NKFE). Positions 408–570 (KAGTNWKTSL…YKENVPGSFP (163 aa)) are linker. Residues phenylalanine 578, arginine 613, arginine 719, tyrosine 763, serine 812, arginine 847, and lysine 852 each contribute to the substrate site. GTP is bound by residues glutamate 964 and asparagine 1085.

The protein belongs to the IcmF family. As to quaternary structure, homodimer. Adenosylcob(III)alamin is required as a cofactor. Requires Mg(2+) as cofactor.

The enzyme catalyses 2-methylpropanoyl-CoA = butanoyl-CoA. It catalyses the reaction 3-methylbutanoyl-CoA = 2,2-dimethylpropanoyl-CoA. The catalysed reaction is GTP + H2O = GDP + phosphate + H(+). Its function is as follows. Catalyzes the reversible interconversion of isobutyryl-CoA and n-butyryl-CoA, and to a lesser extent, of pivalyl-CoA and isovaleryl-CoA, using radical chemistry. Also exhibits GTPase activity, associated with its G-protein domain (MeaI) that functions as a chaperone that assists cofactor delivery and proper holo-enzyme assembly. Also displays ATPase activity. Is not able to convert 3-hydroxybutyryl-CoA to 2-hydroxyisobutyryl-CoA. Does not exhibit methylmalonyl-CoA mutase (MCM) activity. The chain is Fused isobutyryl-CoA mutase from Geobacillus kaustophilus (strain HTA426).